Reading from the N-terminus, the 174-residue chain is MGEINALSCVGQDDVVSLRIVCTMARDGKQHNLEDVDMYGNTALLKACYLGRFECARTLLEFGANIFAMNYFGQNALTLATYAGHLTLVKELLRRRSYKDFNLSSMIPALCVATLQKHSALVAYFTQLDSRGVQETQTVHGLGVAELRGMIKAAGRLDKRNVRSPPTFISNRLR.

2 ANK repeats span residues 39–68 and 72–103; these read YGNT…NIFA and FGQN…DFNL. T167 bears the Phosphothreonine mark.

Inhibits DNA replication early in developments. May bind and block the action of a replication or initiation factor. This is DNA replication inhibitor plutonium (plu) from Drosophila melanogaster (Fruit fly).